Reading from the N-terminus, the 202-residue chain is tRNA (guanine-N(7)-)-methyltransferase (202 aa).

S-adenosyl-L-methionine-binding residues include Glu-34, Glu-59, Asp-86, and Asp-107. Asp-107 is an active-site residue. Residues Lys-111, Asp-143, and 181 to 184 (TDYE) contribute to the substrate site.

It belongs to the class I-like SAM-binding methyltransferase superfamily. TrmB family.

The enzyme catalyses guanosine(46) in tRNA + S-adenosyl-L-methionine = N(7)-methylguanosine(46) in tRNA + S-adenosyl-L-homocysteine. It participates in tRNA modification; N(7)-methylguanine-tRNA biosynthesis. Functionally, catalyzes the formation of N(7)-methylguanine at position 46 (m7G46) in tRNA. This chain is tRNA (guanine-N(7)-)-methyltransferase, found in Metamycoplasma hominis (strain ATCC 23114 / DSM 25592 / NBRC 14850 / NCTC 10111 / PG21) (Mycoplasma hominis).